Consider the following 251-residue polypeptide: 3-deoxy-manno-octulosonate cytidylyltransferase (251 aa).

It belongs to the KdsB family.

The protein localises to the cytoplasm. It catalyses the reaction 3-deoxy-alpha-D-manno-oct-2-ulosonate + CTP = CMP-3-deoxy-beta-D-manno-octulosonate + diphosphate. Its pathway is nucleotide-sugar biosynthesis; CMP-3-deoxy-D-manno-octulosonate biosynthesis; CMP-3-deoxy-D-manno-octulosonate from 3-deoxy-D-manno-octulosonate and CTP: step 1/1. It participates in bacterial outer membrane biogenesis; lipopolysaccharide biosynthesis. Its function is as follows. Activates KDO (a required 8-carbon sugar) for incorporation into bacterial lipopolysaccharide in Gram-negative bacteria. This Vibrio parahaemolyticus serotype O3:K6 (strain RIMD 2210633) protein is 3-deoxy-manno-octulosonate cytidylyltransferase.